The primary structure comprises 130 residues: Small ribosomal subunit protein uS9 (130 aa).

It belongs to the universal ribosomal protein uS9 family. As to quaternary structure, part of the 30S ribosomal subunit.

This is Small ribosomal subunit protein uS9 (rpsI) from Bacillus subtilis (strain 168).